The sequence spans 567 residues: Probable serine/threonine-protein kinase WNK6 (567 aa).

Residues 28-285 (IRYKEVIGKG…AKELLLDPFL (258 aa)) form the Protein kinase domain. Residues 108-111 (TELF) and Lys-158 contribute to the ATP site. The active-site Proton acceptor is the Asp-175. The segment covering 499-509 (VDATKGEDKSS) has biased composition (basic and acidic residues). Positions 499–528 (VDATKGEDKSSIQEVEEATEPVSLEEEERL) are disordered. Over residues 512–525 (EVEEATEPVSLEEE) the composition is skewed to acidic residues. Positions 519-553 (PVSLEEEERLRQELEEIEAKYQEDMKEIATKREEA) form a coiled coil.

The protein belongs to the protein kinase superfamily. Ser/Thr protein kinase family. WNK subfamily.

It carries out the reaction L-seryl-[protein] + ATP = O-phospho-L-seryl-[protein] + ADP + H(+). The enzyme catalyses L-threonyl-[protein] + ATP = O-phospho-L-threonyl-[protein] + ADP + H(+). In terms of biological role, may regulate flowering time by modulating the photoperiod pathway. This Arabidopsis thaliana (Mouse-ear cress) protein is Probable serine/threonine-protein kinase WNK6 (WNK6).